A 532-amino-acid polypeptide reads, in one-letter code: Glucose-6-phosphate isomerase (532 aa).

The active-site Proton donor is Glu322. Residues His351 and Lys457 contribute to the active site.

The protein belongs to the GPI family.

It is found in the cytoplasm. The catalysed reaction is alpha-D-glucose 6-phosphate = beta-D-fructose 6-phosphate. It participates in carbohydrate biosynthesis; gluconeogenesis. Its pathway is carbohydrate degradation; glycolysis; D-glyceraldehyde 3-phosphate and glycerone phosphate from D-glucose: step 2/4. Functionally, catalyzes the reversible isomerization of glucose-6-phosphate to fructose-6-phosphate. The protein is Glucose-6-phosphate isomerase of Synechococcus sp. (strain JA-3-3Ab) (Cyanobacteria bacterium Yellowstone A-Prime).